Consider the following 114-residue polypeptide: Large ribosomal subunit protein uL18 (114 aa).

Belongs to the universal ribosomal protein uL18 family. Part of the 50S ribosomal subunit; part of the 5S rRNA/L5/L18/L25 subcomplex. Contacts the 5S and 23S rRNAs.

In terms of biological role, this is one of the proteins that bind and probably mediate the attachment of the 5S RNA into the large ribosomal subunit, where it forms part of the central protuberance. The polypeptide is Large ribosomal subunit protein uL18 (Parabacteroides distasonis (strain ATCC 8503 / DSM 20701 / CIP 104284 / JCM 5825 / NCTC 11152)).